Reading from the N-terminus, the 427-residue chain is Adenylosuccinate synthetase (427 aa).

GTP is bound by residues 12 to 18 and 40 to 42; these read GDEGKGK and GHT. The active-site Proton acceptor is aspartate 13. Positions 13 and 40 each coordinate Mg(2+). IMP is bound by residues 13 to 16, 38 to 41, threonine 128, arginine 142, glutamine 223, threonine 238, and arginine 302; these read DEGK and NAGH. The Proton donor role is filled by histidine 41. Residue 298-304 participates in substrate binding; the sequence is TTTGRNR. Residues arginine 304, 330–332, and 412–414 contribute to the GTP site; these read KLD and GVG.

The protein belongs to the adenylosuccinate synthetase family. In terms of assembly, homodimer. Requires Mg(2+) as cofactor.

The protein resides in the cytoplasm. It catalyses the reaction IMP + L-aspartate + GTP = N(6)-(1,2-dicarboxyethyl)-AMP + GDP + phosphate + 2 H(+). The protein operates within purine metabolism; AMP biosynthesis via de novo pathway; AMP from IMP: step 1/2. Its function is as follows. Plays an important role in the de novo pathway of purine nucleotide biosynthesis. Catalyzes the first committed step in the biosynthesis of AMP from IMP. The protein is Adenylosuccinate synthetase of Thermobifida fusca (strain YX).